The chain runs to 371 residues: Flagellar P-ring protein 1 (371 aa).

The signal sequence occupies residues 1 to 19 (MRRALLLAALLACAPPAFA).

It belongs to the FlgI family. As to quaternary structure, the basal body constitutes a major portion of the flagellar organelle and consists of four rings (L,P,S, and M) mounted on a central rod.

The protein localises to the periplasm. Its subcellular location is the bacterial flagellum basal body. Assembles around the rod to form the L-ring and probably protects the motor/basal body from shearing forces during rotation. This Cereibacter sphaeroides (strain ATCC 17023 / DSM 158 / JCM 6121 / CCUG 31486 / LMG 2827 / NBRC 12203 / NCIMB 8253 / ATH 2.4.1.) (Rhodobacter sphaeroides) protein is Flagellar P-ring protein 1.